Consider the following 157-residue polypeptide: UPF0251 protein CLK_0815 (157 aa).

It belongs to the UPF0251 family.

This chain is UPF0251 protein CLK_0815, found in Clostridium botulinum (strain Loch Maree / Type A3).